The following is a 160-amino-acid chain: Protransforming growth factor alpha (160 aa).

An N-terminal signal peptide occupies residues 1–23 (MVPSAGQLALFALGIVLAACQAL). The propeptide at 24–39 (ENSTSPLSADPPVAAA) is removed in mature form. Topologically, residues 24–98 (ENSTSPLSAD…AVVAASQKKQ (75 aa)) are extracellular. The N-linked (GlcNAc...) asparagine glycan is linked to N25. Residues 43-83 (HFNDCPDSHTQFCFHGTCRFLVQEDKPACVCHSGYVGARCE) form the EGF-like domain. Intrachain disulfides connect C47–C60, C55–C71, and C73–C82. Positions 90–160 (VVAASQKKQA…TACCHSETVV (71 aa)) are cleaved as a propeptide — removed in mature form. Residues 99–124 (AITALVVVSIVALAVLIITCVLIHCC) traverse the membrane as a helical segment. Over 125–160 (QVRKHCEWCRALICRHEKPSALLKGRTACCHSETVV) the chain is Cytoplasmic. S-palmitoyl cysteine attachment occurs at residues C153 and C154.

In terms of assembly, interacts with the PDZ domains of MAGI3, SDCBP and SNTA1. The interaction with SDCBP, is required for the targeting to the cell surface. In the endoplasmic reticulum, in its immature form (i.e. with a prosegment and lacking full N-glycosylation), interacts with CNIH. In the Golgi apparatus, may form a complex with CNIH and GORASP2. Interacts (via cytoplasmic C-terminal domain) with NKD2. In terms of tissue distribution, isoform 1, isoform 3 and isoform 4 are expressed in keratinocytes and tumor-derived cell lines.

The protein resides in the secreted. The protein localises to the extracellular space. It is found in the cell membrane. Functionally, TGF alpha is a mitogenic polypeptide that is able to bind to the EGF receptor/EGFR and to act synergistically with TGF beta to promote anchorage-independent cell proliferation in soft agar. The chain is Protransforming growth factor alpha (TGFA) from Homo sapiens (Human).